The following is a 467-amino-acid chain: ATP synthase subunit beta, chloroplastic (467 aa).

Gly149 to Thr156 lines the ATP pocket.

This sequence belongs to the ATPase alpha/beta chains family. In terms of assembly, F-type ATPases have 2 components, CF(1) - the catalytic core - and CF(0) - the membrane proton channel. CF(1) has five subunits: alpha(3), beta(3), gamma(1), delta(1), epsilon(1). CF(0) has four main subunits: a(1), b(1), b'(1) and c(9-12).

Its subcellular location is the plastid. The protein resides in the chloroplast thylakoid membrane. The catalysed reaction is ATP + H2O + 4 H(+)(in) = ADP + phosphate + 5 H(+)(out). Its function is as follows. Produces ATP from ADP in the presence of a proton gradient across the membrane. The catalytic sites are hosted primarily by the beta subunits. The polypeptide is ATP synthase subunit beta, chloroplastic (Cyanidioschyzon merolae (strain NIES-3377 / 10D) (Unicellular red alga)).